Here is a 469-residue protein sequence, read N- to C-terminus: MKHAVKHIHFVGIGGAGMSGIAEILHNLGYRVSGSDQSDGATTRRLASLGIRVAIGHDAAHIAGAEAVVTSTAVKGDNPEVIAARSRRVPVVPRAVMLAELMRLKQGIAIAGTHGKTTTTSLVASVLAEAGLDPTFVIGGRLNSAGANSRLGAGDYIVVEADESDASFLNLLPVLSVVTNIDADHMDTYGHDLGRLKHAFLEFLHRMPFYGAAIICGDDPGVRSIIPMISRPVVSYGFGEDAQIRAVDVLALPGGQMRFTAQRRNGVVMPDLPITLNLPGRHNVLNALAVIAVAAELELPDAPVQKALAAFDGVGRRFQRYGELPTPAGGRFTLIDDYGHHPVEMAAVIAAARGAFPGRRLVIAFQPHRYTRTRDCFEDFVKVMGGADAVLLGEVYAAGEAPIVAADGRALARALRVGGKLEPVFVDEIAAMPQAIADNVQDGDVVITMGAGSIGAVPGQVVELLGAHA.

112-118 provides a ligand contact to ATP; that stretch reads GTHGKTT.

This sequence belongs to the MurCDEF family.

It localises to the cytoplasm. It catalyses the reaction UDP-N-acetyl-alpha-D-muramate + L-alanine + ATP = UDP-N-acetyl-alpha-D-muramoyl-L-alanine + ADP + phosphate + H(+). It functions in the pathway cell wall biogenesis; peptidoglycan biosynthesis. Cell wall formation. This is UDP-N-acetylmuramate--L-alanine ligase from Methylibium petroleiphilum (strain ATCC BAA-1232 / LMG 22953 / PM1).